The primary structure comprises 153 residues: 6,7-dimethyl-8-ribityllumazine synthase (153 aa).

Residues F21, 55–57 (AFE), and 79–81 (TVI) each bind 5-amino-6-(D-ribitylamino)uracil. 84–85 (AT) lines the (2S)-2-hydroxy-3-oxobutyl phosphate pocket. H87 (proton donor) is an active-site residue. Residue F112 participates in 5-amino-6-(D-ribitylamino)uracil binding. R126 lines the (2S)-2-hydroxy-3-oxobutyl phosphate pocket.

This sequence belongs to the DMRL synthase family. As to quaternary structure, forms an icosahedral capsid composed of 60 subunits, arranged as a dodecamer of pentamers.

The catalysed reaction is (2S)-2-hydroxy-3-oxobutyl phosphate + 5-amino-6-(D-ribitylamino)uracil = 6,7-dimethyl-8-(1-D-ribityl)lumazine + phosphate + 2 H2O + H(+). The protein operates within cofactor biosynthesis; riboflavin biosynthesis; riboflavin from 2-hydroxy-3-oxobutyl phosphate and 5-amino-6-(D-ribitylamino)uracil: step 1/2. In terms of biological role, catalyzes the formation of 6,7-dimethyl-8-ribityllumazine by condensation of 5-amino-6-(D-ribitylamino)uracil with 3,4-dihydroxy-2-butanone 4-phosphate. This is the penultimate step in the biosynthesis of riboflavin. The sequence is that of 6,7-dimethyl-8-ribityllumazine synthase from Bacillus cereus (strain 03BB102).